The primary structure comprises 151 residues: Probable transcriptional regulator syrB3 (151 aa).

Residues 1 to 65 (MVDESNAGPV…QERSEKLRLI (65 aa)) are disordered. Positions 7-23 (AGPVAPAVVADAEVKAP) are enriched in low complexity. Residues 52–65 (GYSEQERSEKLRLI) show a composition bias toward basic and acidic residues.

It belongs to the SyrB family.

The sequence is that of Probable transcriptional regulator syrB3 (syrB3) from Rhizobium meliloti (strain 1021) (Ensifer meliloti).